The primary structure comprises 212 residues: Adenylate kinase (212 aa).

10-15 (GAGKGT) serves as a coordination point for ATP. The segment at 30–59 (AIGDIFRTIIKTSTSEAELINNYVKQGELI) is NMP. AMP-binding positions include Arg-36, 57–59 (ELI), 85–88 (GYPR), and Gln-92. The interval 122 to 160 (GRYSCKNCGKIYNRYFVQPKTDNVCDVCGSSTFDYRKDD) is LID. Residue Arg-123 participates in ATP binding. Cys-126 and Cys-129 together coordinate Zn(2+). Residue 132 to 133 (IY) participates in ATP binding. The Zn(2+) site is built by Cys-146 and Cys-149. Residues Arg-157 and Arg-168 each contribute to the AMP site. Lys-196 is an ATP binding site.

It belongs to the adenylate kinase family. As to quaternary structure, monomer.

The protein resides in the cytoplasm. It catalyses the reaction AMP + ATP = 2 ADP. The protein operates within purine metabolism; AMP biosynthesis via salvage pathway; AMP from ADP: step 1/1. Its function is as follows. Catalyzes the reversible transfer of the terminal phosphate group between ATP and AMP. Plays an important role in cellular energy homeostasis and in adenine nucleotide metabolism. This chain is Adenylate kinase, found in Rickettsia conorii (strain ATCC VR-613 / Malish 7).